A 780-amino-acid polypeptide reads, in one-letter code: Vezatin (780 aa).

2 helical membrane passes run 140–160 and 162–182; these read ATPN…LIMF and TCWI…YLII. The stretch at 430–467 forms a coiled coil; sequence VRSLQLHLKALLNEVIILEDELEKLVCTKETQELLSEA. Disordered stretches follow at residues 620–718 and 757–780; these read DPVE…PRDT and QEQT…VEEK. Residues 624–643 show a composition bias toward polar residues; the sequence is SVSNSEPPMNSDTEKVNSNA. Basic and acidic residues-rich tracts occupy residues 647–663 and 690–699; these read ETSK…RTEY and TMCHQHESEA. Low complexity predominate over residues 702–711; the sequence is PQAAAAGATA. The span at 761-780 shows a compositional bias: acidic residues; that stretch reads FGDEEEEQLVEGGENEVEEK.

This sequence belongs to the vezatin family. In terms of assembly, interacts with USH2A (via the cytoplasmic region); the interaction associates VEZT with the USH2 complex at the stereocilia base. Interacts with myosin MYO7A and the cadherin-catenins complex. As to expression, expressed in developing cochlear hair cells. Isoform 1, isoform 2 and isoform 3 are expressed in testis. In the seminiferous epithelium, present exclusively in the acrosome of spermatids (at protein level).

It is found in the cell membrane. The protein resides in the cell projection. It localises to the stereocilium membrane. The protein localises to the cell junction. Its subcellular location is the adherens junction. It is found in the nucleus. The protein resides in the cytoplasmic vesicle. It localises to the secretory vesicle. The protein localises to the acrosome. Its function is as follows. Plays a pivotal role in the establishment of adherens junctions and their maintenance in adult life. Required for morphogenesis of the preimplantation embryo, and for the implantation process. In Mus musculus (Mouse), this protein is Vezatin.